We begin with the raw amino-acid sequence, 566 residues long: Chondroitin sulfate proteoglycan 5 (566 aa).

The signal sequence occupies residues M1–A30. Topologically, residues V31–C423 are extracellular. S38 carries O-linked (Xyl...) (chondroitin sulfate) serine glycosylation. Residues A39–L82 form a disordered region. A glycan (N-linked (GlcNAc...) asparagine) is linked at N57. S117 carries O-linked (Xyl...) (chondroitin sulfate) serine glycosylation. Disordered regions lie at residues I143–Q202, G215–W248, and E262–E354. O-linked (GalNAc...) serine glycosylation is present at S165. The interaction with TNC and TNR stretch occupies residues D264–L301. The span at D273–K286 shows a compositional bias: acidic residues. Residues R371–E413 form the EGF-like domain. Cystine bridges form between C374-C387, C381-C397, and C399-C412. The helical transmembrane segment at V424–A444 threads the bilayer. Positions F442–T460 are interaction with GOPC. At K445 to T566 the chain is on the cytoplasmic side. Residues S467, S475, S483, and S543 each carry the phosphoserine modification.

As to quaternary structure, binds TNR and probably TNC. Interacts with ERBB3 and GOPC. Interacts with MDK; this interaction is independent of the presence of chondroitin sulfate chains and promotes elongation of oligodendroglial precursor-like cells. Post-translationally, N-glycosylated. O-glycosylated; contains chondroitin sulfate glycans. Part-time proteoglycan, expressed in part as a proteoglycan exhibiting chondroitin sulfate glycans and in part as a non-proteoglycan form. The relative amount of both forms depends on tissues and tissue maturation. In terms of processing, phosphorylated; in intracellular and extracellular parts. As to expression, detected in cerebrospinal fluid (at protein level). Detected in urine (at protein level). Expressed in brain (at protein level).

It localises to the cell membrane. Its subcellular location is the synaptic cell membrane. The protein resides in the endoplasmic reticulum membrane. The protein localises to the golgi apparatus membrane. It is found in the cell surface. It localises to the secreted. Its function is as follows. May function as a growth and differentiation factor involved in neuritogenesis. May induce ERBB3 activation. The protein is Chondroitin sulfate proteoglycan 5 (CSPG5) of Homo sapiens (Human).